We begin with the raw amino-acid sequence, 286 residues long: ATP synthase gamma chain (286 aa).

This sequence belongs to the ATPase gamma chain family. In terms of assembly, F-type ATPases have 2 components, CF(1) - the catalytic core - and CF(0) - the membrane proton channel. CF(1) has five subunits: alpha(3), beta(3), gamma(1), delta(1), epsilon(1). CF(0) has three main subunits: a, b and c.

The protein resides in the cell inner membrane. Produces ATP from ADP in the presence of a proton gradient across the membrane. The gamma chain is believed to be important in regulating ATPase activity and the flow of protons through the CF(0) complex. This chain is ATP synthase gamma chain, found in Marinomonas sp. (strain MWYL1).